The following is a 1645-amino-acid chain: Protein MON2 homolog (1645 aa).

It belongs to the MON2 family.

Functionally, may be required for traffic between late Golgi and early endosomes. This is Protein MON2 homolog from Caenorhabditis briggsae.